An 82-amino-acid polypeptide reads, in one-letter code: Consomatin Ro2 (82 aa).

The N-terminal stretch at 1-22 (MQTAYWLMVMMMVWITAPLYEG) is a signal peptide. The propeptide occupies 23-57 (GKPNDVIRGLVPDDLTPQFILRSLISRRRSDKDVR). A disulfide bond links cysteine 62 and cysteine 68. D-tryptophan is present on tryptophan 64. 2 positions are modified to 4-hydroxyproline: proline 69 and proline 70. The propeptide occupies 72-82 (LWRRHDRKGKD).

Belongs to the conotoxin C superfamily. Consomatin family. As to expression, expressed by the venom duct.

Its subcellular location is the secreted. Moderately activates human somatostatin receptors (SSTR) with a preferential activation of SSTR1 and SSTR4. In vivo, does not cause behavioral changes in mice within a few minutes of intracranial injection, but causes a progressive loss of movement thereafter. Four to five hours after injection, mice recover, even with the highest dose tested. Shows antinociception and antihyperalgesia activities in two mouse models of acute pain, most probably by acting outside the central nervous system. The protein is Consomatin Ro2 of Conus rolani (Cone snail).